Reading from the N-terminus, the 333-residue chain is uncharacterized protein (333 aa).

Positions Met1–Ala16 are cleaved as a signal peptide. N-linked (GlcNAc...) asparagine glycosylation is present at Asn204.

This is an uncharacterized protein from Encephalitozoon cuniculi (strain GB-M1) (Microsporidian parasite).